The sequence spans 170 residues: Crossover junction endodeoxyribonuclease RuvC (170 aa).

Catalysis depends on residues Asp-11, Glu-71, and Asp-143. Residues Asp-11, Glu-71, and Asp-143 each contribute to the Mg(2+) site.

The protein belongs to the RuvC family. Homodimer which binds Holliday junction (HJ) DNA. The HJ becomes 2-fold symmetrical on binding to RuvC with unstacked arms; it has a different conformation from HJ DNA in complex with RuvA. In the full resolvosome a probable DNA-RuvA(4)-RuvB(12)-RuvC(2) complex forms which resolves the HJ. The cofactor is Mg(2+).

Its subcellular location is the cytoplasm. The enzyme catalyses Endonucleolytic cleavage at a junction such as a reciprocal single-stranded crossover between two homologous DNA duplexes (Holliday junction).. Its function is as follows. The RuvA-RuvB-RuvC complex processes Holliday junction (HJ) DNA during genetic recombination and DNA repair. Endonuclease that resolves HJ intermediates. Cleaves cruciform DNA by making single-stranded nicks across the HJ at symmetrical positions within the homologous arms, yielding a 5'-phosphate and a 3'-hydroxyl group; requires a central core of homology in the junction. The consensus cleavage sequence is 5'-(A/T)TT(C/G)-3'. Cleavage occurs on the 3'-side of the TT dinucleotide at the point of strand exchange. HJ branch migration catalyzed by RuvA-RuvB allows RuvC to scan DNA until it finds its consensus sequence, where it cleaves and resolves the cruciform DNA. The protein is Crossover junction endodeoxyribonuclease RuvC of Sinorhizobium fredii (strain NBRC 101917 / NGR234).